A 551-amino-acid polypeptide reads, in one-letter code: Cytochrome bc1 complex cytochrome b subunit (551 aa).

A helical transmembrane segment spans residues 44–64; sequence FLLGEIALYSFIVLLLTGVYL. 2 residues coordinate heme: His-113 and His-127. Transmembrane regions (helical) follow at residues 117–137, 145–165, and 188–208; these read ALMFTAAIMVHLARIFFTGAF, WVIGSLLLILAMFEGYFGYSM, and VIGTWLHWALFGGDFPGTILI. Heme contacts are provided by His-215 and His-230. The next 5 membrane-spanning stretches (helical) occupy residues 216–236, 265–285, 334–354, 380–400, and 417–437; these read ILLIPGVILALIGLHLALVWF, SGAFFAAIVGVLGLMGGFLQI, PVWVAVIMALVFVLLITYPFL, IGAMAITFYMVLTLAAMNDII, and IGMVILPLLVYFITYRWCIGL. Residues 532-551 form a disordered region; sequence ALREHQDSIASSPNGERGKH.

Belongs to the cytochrome b family. In terms of assembly, the cytochrome bc1 complex is composed of a cytochrome b (QcrB), the Rieske iron-sulfur protein (QcrA) and a diheme cytochrome c (QcrC) subunit. Requires heme as cofactor.

It localises to the cell membrane. The catalysed reaction is a quinol + 2 Fe(III)-[cytochrome c](out) = a quinone + 2 Fe(II)-[cytochrome c](out) + 2 H(+)(out). Functionally, cytochrome b subunit of the cytochrome bc1 complex, an essential component of the respiratory electron transport chain required for ATP synthesis. The bc1 complex catalyzes the oxidation of ubiquinol and the reduction of cytochrome c in the respiratory chain. The bc1 complex operates through a Q-cycle mechanism that couples electron transfer to generation of the proton gradient that drives ATP synthesis. The cytochrome b subunit contains two ubiquinol reactive sites: the oxidation (QP) site and the reduction (QN) site. This Mycobacterium leprae (strain TN) protein is Cytochrome bc1 complex cytochrome b subunit (qcrB).